A 393-amino-acid chain; its full sequence is Acetate kinase (393 aa).

N8 contributes to the Mg(2+) binding site. ATP is bound at residue K15. R91 serves as a coordination point for substrate. The Proton donor/acceptor role is filled by D148. ATP is bound by residues 206–210, 280–282, and 325–329; these read HLGSG, DMR, and GVGEN. E376 is a binding site for Mg(2+).

It belongs to the acetokinase family. In terms of assembly, homodimer. Mg(2+) is required as a cofactor. The cofactor is Mn(2+).

It is found in the cytoplasm. It carries out the reaction acetate + ATP = acetyl phosphate + ADP. It participates in metabolic intermediate biosynthesis; acetyl-CoA biosynthesis; acetyl-CoA from acetate: step 1/2. In terms of biological role, catalyzes the formation of acetyl phosphate from acetate and ATP. Can also catalyze the reverse reaction. This chain is Acetate kinase, found in Rhizobium meliloti (Ensifer meliloti).